The primary structure comprises 67 residues: Large ribosomal subunit protein bL35 (67 aa).

The protein belongs to the bacterial ribosomal protein bL35 family.

The polypeptide is Large ribosomal subunit protein bL35 (Sinorhizobium fredii (strain NBRC 101917 / NGR234)).